The sequence spans 84 residues: Cell division topological specificity factor (84 aa).

Belongs to the MinE family.

In terms of biological role, prevents the cell division inhibition by proteins MinC and MinD at internal division sites while permitting inhibition at polar sites. This ensures cell division at the proper site by restricting the formation of a division septum at the midpoint of the long axis of the cell. This Pseudomonas fluorescens (strain Pf0-1) protein is Cell division topological specificity factor.